Reading from the N-terminus, the 599-residue chain is Proline--tRNA ligase (599 aa).

This sequence belongs to the class-II aminoacyl-tRNA synthetase family. ProS type 1 subfamily. In terms of assembly, homodimer.

It localises to the cytoplasm. It carries out the reaction tRNA(Pro) + L-proline + ATP = L-prolyl-tRNA(Pro) + AMP + diphosphate. In terms of biological role, catalyzes the attachment of proline to tRNA(Pro) in a two-step reaction: proline is first activated by ATP to form Pro-AMP and then transferred to the acceptor end of tRNA(Pro). As ProRS can inadvertently accommodate and process non-cognate amino acids such as alanine and cysteine, to avoid such errors it has two additional distinct editing activities against alanine. One activity is designated as 'pretransfer' editing and involves the tRNA(Pro)-independent hydrolysis of activated Ala-AMP. The other activity is designated 'posttransfer' editing and involves deacylation of mischarged Ala-tRNA(Pro). The misacylated Cys-tRNA(Pro) is not edited by ProRS. This Prochlorococcus marinus (strain MIT 9313) protein is Proline--tRNA ligase.